The sequence spans 345 residues: S-adenosylmethionine:tRNA ribosyltransferase-isomerase (345 aa).

The protein belongs to the QueA family. In terms of assembly, monomer.

The protein localises to the cytoplasm. The catalysed reaction is 7-aminomethyl-7-carbaguanosine(34) in tRNA + S-adenosyl-L-methionine = epoxyqueuosine(34) in tRNA + adenine + L-methionine + 2 H(+). Its pathway is tRNA modification; tRNA-queuosine biosynthesis. Transfers and isomerizes the ribose moiety from AdoMet to the 7-aminomethyl group of 7-deazaguanine (preQ1-tRNA) to give epoxyqueuosine (oQ-tRNA). The sequence is that of S-adenosylmethionine:tRNA ribosyltransferase-isomerase from Thermus thermophilus (strain ATCC BAA-163 / DSM 7039 / HB27).